Reading from the N-terminus, the 312-residue chain is MELVGWLVDKGITSEKQWIQEDQASYISFNAASNSRSQIKAALDNAGKIMSLTKTAPDYLVGQQPVEDISSNRIYKILELNGYDPQYAASVFLGWATKKFGKRNTIWLFGPATTGKTNIAEAIAHTVPFYGCVNWTNENFPFNDCVDKMVIWWEEGKMTAKVVESAKAILGGSKVRVDQKCKSSAQIDPTPVIVTSNTNMCAVIDGNSTTFEHQQPLQDRMFKFELTRRLDHDFGKVTKQEVKDFFRWAKDHVVEVEHEFYVKKGGAKKRPAPSDADISEPKRVRESVAQPSTSDAEASINYADRLARGHSL.

Residues 84-239 form the SF3 helicase domain; it reads DPQYAASVFL…LDHDFGKVTK (156 aa). 110–117 provides a ligand contact to ATP; that stretch reads GPATTGKT. Residues 264 to 301 form a disordered region; it reads KGGAKKRPAPSDADISEPKRVRESVAQPSTSDAEASIN.

In terms of assembly, homooligomer.

The protein resides in the host nucleus. The catalysed reaction is ATP + H2O = ADP + phosphate + H(+). Its function is as follows. Plays a critical role during packaging of viral DNA into empty capsids, where they are thought to be part of the packaging motor complex. The single stranded genomic DNA is packaged in a 3' to 5' direction and requires the association of viral DNA with Rep40. This is Protein Rep40 (Rep40) from Mammalia (AAV-2).